Here is a 902-residue protein sequence, read N- to C-terminus: MTAAISDRVREDIRLLGRVLGRVIAQQEGEEVYELVEATRRMAFDVSHGDADPEDLMVIFRDLDITKTNLVARAFSYFALLANLVEDLDDESVEADVSLRKTFAKLKREGVSAADAASVIRSAEVAPVLTAHPTETRRRTVFDTQTRIKQLLKDAHHGGDMQVIEQEMYLRMTLLWQTALIRIARPTLEDEIDVGLRYYKKSLLEQVPALNRSIRHSMRETFGLQLPDIAVMRPGSWIGGDHDGNPYVNARTLTYATRQAAKTVARYYVEQLGELERELSLSDRYSSCSKELLALAEASGNNWESRVDEPYRRAVYGMRARMKSNVDALERPEKTAGKKSSKRTPYATPEEFLRDLDVIDRSLRAHNDDVIADDRLARIRSAVTTFGFHLYTLDIRQNSESFEAVIEEVFAAARRVPGGKRYSELAEAEKVELLIQELQTPRPLLFPGALEVEDAFSADTTKELGIFLAAAQAVRDFGSRSIAHCIISMTATVSDILEPMVLLKEVGLRDVDVVPLFETIDDLRCGAAILRELWSHPFYREHLRARGDIQEVMLGYSDSNKDGGYLQANWALYDAELGLVELCREHNIELRLAHGRGGAVGRGGGPTYDAILAQPKGAVSGSVRITEQGEVISAKYGAPETARRHLEAFVSGALEASLLDTEPIADPDRAYAIMRDLAGFSGQRYQELVGDPGFIEYFTQSTPLHEIGELNLGSRPAARKQTTAISDLRAIPWVLSWSQSRTNIPGWFGVGSAVSRFVSAVPEKDRESRWQELRDLYATWPFFRSVMSNMAQVMAKAEISLARLYADLVDDPEVADRIYALIAEEFELTRRAYLAITGNEALVSENQRQARSLKRRYPYLLPLNAIQLELLRRYRGGDDQFLVSKTIQVTMNGLATALRNAG.

His132 is a catalytic residue. The tract at residues Asp327 to Tyr346 is disordered. The active site involves Lys561.

This sequence belongs to the PEPCase type 1 family. The cofactor is Mg(2+).

It carries out the reaction oxaloacetate + phosphate = phosphoenolpyruvate + hydrogencarbonate. Forms oxaloacetate, a four-carbon dicarboxylic acid source for the tricarboxylic acid cycle. The polypeptide is Phosphoenolpyruvate carboxylase (Corynebacterium diphtheriae (strain ATCC 700971 / NCTC 13129 / Biotype gravis)).